Consider the following 376-residue polypeptide: Flap endonuclease 1 (376 aa).

Residues 1 to 105 are N-domain; it reads MGIKGLSKLL…GELNKRKENA (105 aa). Aspartate 34 lines the Mg(2+) pocket. Positions 47 and 71 each coordinate DNA. Mg(2+) contacts are provided by aspartate 87, glutamate 159, glutamate 161, aspartate 180, and aspartate 182. Positions 123–254 are I-domain; it reads QAKKLMKRTA…ITAFELIQQY (132 aa). Glutamate 159 serves as a coordination point for DNA. DNA is bound by residues glycine 232 and aspartate 234. Aspartate 234 is a binding site for Mg(2+). Positions 336–344 are interaction with PCNA; it reads AQGRLDSFF. Positions 352–376 are disordered; the sequence is SKSEAASGVKRKKPTTKAKESRKKK. A compositionally biased stretch (basic residues) spans 360-376; it reads VKRKKPTTKAKESRKKK.

It belongs to the XPG/RAD2 endonuclease family. FEN1 subfamily. As to quaternary structure, interacts with PCNA. Three molecules of FEN1 bind to one PCNA trimer with each molecule binding to one PCNA monomer. PCNA stimulates the nuclease activity without altering cleavage specificity. Requires Mg(2+) as cofactor. In terms of processing, phosphorylated. Phosphorylation upon DNA damage induces relocalization to the nuclear plasma.

It is found in the nucleus. It localises to the nucleolus. The protein resides in the nucleoplasm. Its subcellular location is the mitochondrion. Its function is as follows. Structure-specific nuclease with 5'-flap endonuclease and 5'-3' exonuclease activities involved in DNA replication and repair. During DNA replication, cleaves the 5'-overhanging flap structure that is generated by displacement synthesis when DNA polymerase encounters the 5'-end of a downstream Okazaki fragment. It enters the flap from the 5'-end and then tracks to cleave the flap base, leaving a nick for ligation. Also involved in the long patch base excision repair (LP-BER) pathway, by cleaving within the apurinic/apyrimidinic (AP) site-terminated flap. Acts as a genome stabilization factor that prevents flaps from equilibrating into structures that lead to duplications and deletions. Also possesses 5'-3' exonuclease activity on nicked or gapped double-stranded DNA, and exhibits RNase H activity. Also involved in replication and repair of rDNA and in repairing mitochondrial DNA. This is Flap endonuclease 1 from Entamoeba dispar (strain ATCC PRA-260 / SAW760).